Here is a 451-residue protein sequence, read N- to C-terminus: 2-succinylbenzoate--CoA ligase (451 aa).

Belongs to the ATP-dependent AMP-binding enzyme family. MenE subfamily.

It carries out the reaction 2-succinylbenzoate + ATP + CoA = 2-succinylbenzoyl-CoA + AMP + diphosphate. It functions in the pathway quinol/quinone metabolism; 1,4-dihydroxy-2-naphthoate biosynthesis; 1,4-dihydroxy-2-naphthoate from chorismate: step 5/7. The protein operates within quinol/quinone metabolism; menaquinone biosynthesis. Converts 2-succinylbenzoate (OSB) to 2-succinylbenzoyl-CoA (OSB-CoA). This chain is 2-succinylbenzoate--CoA ligase, found in Lactococcus lactis subsp. lactis (strain IL1403) (Streptococcus lactis).